The primary structure comprises 427 residues: Glutamate-1-semialdehyde 2,1-aminomutase (427 aa).

Lysine 266 bears the N6-(pyridoxal phosphate)lysine mark.

The protein belongs to the class-III pyridoxal-phosphate-dependent aminotransferase family. HemL subfamily. Homodimer. Requires pyridoxal 5'-phosphate as cofactor.

Its subcellular location is the cytoplasm. It carries out the reaction (S)-4-amino-5-oxopentanoate = 5-aminolevulinate. It functions in the pathway porphyrin-containing compound metabolism; protoporphyrin-IX biosynthesis; 5-aminolevulinate from L-glutamyl-tRNA(Glu): step 2/2. The protein is Glutamate-1-semialdehyde 2,1-aminomutase of Aromatoleum aromaticum (strain DSM 19018 / LMG 30748 / EbN1) (Azoarcus sp. (strain EbN1)).